The primary structure comprises 507 residues: Solute carrier family 2, facilitated glucose transporter member 6 (507 aa).

Residues 1–28 form a disordered region; sequence MQEPLLGAEGPDYDTFPEKPPPSPGDRA. The Cytoplasmic segment spans residues 1-37; sequence MQEPLLGAEGPDYDTFPEKPPPSPGDRARVGTLQNKR. Residues 5 to 6 carry the Dileucine internalization motif motif; sequence LL. A Phosphoserine modification is found at S23. The helical transmembrane segment at 38–58 threads the bilayer; sequence VFLATFAAVLGNFSFGYALVY. Topologically, residues 59–81 are extracellular; that stretch reads TSPVIPALERSLDPDLHLTKSQA. Residues 82 to 102 traverse the membrane as a helical segment; it reads SWFGSVFTLGAAAGGLSAMIL. Topologically, residues 103–111 are cytoplasmic; the sequence is NDLLGRKLS. Residues 112–132 form a helical membrane-spanning segment; sequence IMFSAVPSAAGYALMAGAHGL. Residues 133 to 140 lie on the Extracellular side of the membrane; the sequence is WMLLLGRT. A helical membrane pass occupies residues 141–161; that stretch reads LTGFAGGLTAACIPVYVSEIA. Over 162-168 the chain is Cytoplasmic; that stretch reads PPGVRGA. Residues 169 to 189 traverse the membrane as a helical segment; sequence LGATPQLMAVFGSLSLYALGL. Q174 provides a ligand contact to a D-hexose. Residues 190–194 are Extracellular-facing; that stretch reads LLPWR. The chain crosses the membrane as a helical span at residues 195-215; sequence WLAVAGEAPVLIMILLLSFMP. Residues 216 to 289 are Cytoplasmic-facing; it reads NSPRFLLSRG…LLMRLLQQLT (74 aa). Position 286-287 (286-287) interacts with a D-hexose; that stretch reads QQ. The helical transmembrane segment at 290 to 310 threads the bilayer; the sequence is GITPILVYLQSIFDSTAVLLP. Residues 311-314 lie on the Extracellular side of the membrane; that stretch reads PKDD. The helical transmembrane segment at 315–335 threads the bilayer; that stretch reads AAIVGAVRLLSVLIAALTMDL. Over 336–339 the chain is Cytoplasmic; sequence AGRK. Residues 340-360 form a helical membrane-spanning segment; it reads VLLFVSAAIMFAANLTLGLYI. Residues 361 to 395 lie on the Extracellular side of the membrane; it reads HFGPRPLSPNSTAGLESESWGDLAQPLAAPAGYLT. An N-linked (GlcNAc...) asparagine glycan is attached at N370. Residues 396–416 traverse the membrane as a helical segment; sequence LVPLLATMLFIMGYAVGWGPI. Residues 417-435 lie on the Cytoplasmic side of the membrane; the sequence is TWLLMSEVLPLRARGVASG. An a D-hexose-binding site is contributed by W418. Residues 436 to 456 traverse the membrane as a helical segment; sequence LCVLASWLTAFVLTKSFLPVV. Topologically, residues 457-462 are extracellular; the sequence is STFGLQ. The chain crosses the membrane as a helical span at residues 463-483; that stretch reads VPFFFFAAICLVSLVFTGCCV. Topologically, residues 484–507 are cytoplasmic; it reads PETKGRSLEQIESFFRTGRRSFLR.

The protein belongs to the major facilitator superfamily. Sugar transporter (TC 2.A.1.1) family. Glucose transporter subfamily. In terms of tissue distribution, highly expressed in brain, spleen and peripheral blood leukocytes.

Its subcellular location is the lysosome membrane. Probable sugar transporter that acts as a regulator of glycolysis in macrophages. Does not transport glucose. This chain is Solute carrier family 2, facilitated glucose transporter member 6, found in Homo sapiens (Human).